We begin with the raw amino-acid sequence, 235 residues long: RING-H2 finger protein ATL33 (235 aa).

The chain crosses the membrane as a helical span at residues 64–84 (LIFVVIAFVAVPALVYALFFN). The interval 87–133 (CSSSRRNSSSSRTSSSSDDTPHATVDTPPITETTVTSESGGKFHKDT) is disordered. Over residues 88–103 (SSSRRNSSSSRTSSSS) the composition is skewed to low complexity. The span at 116 to 125 (ITETTVTSES) shows a compositional bias: polar residues. An RING-type; atypical zinc finger spans residues 142 to 184 (CSVCLMVFTDSDELRQLSECKHAFHVLCIETWLKDHPNCPICR). Over residues 201–216 (NVNGNVNRSGGNRRVS) the composition is skewed to low complexity. Residues 201-235 (NVNGNVNRSGGNRRVSATSRDDDWRQGLPDASSLV) form a disordered region.

Belongs to the RING-type zinc finger family. ATL subfamily.

The protein resides in the membrane. It catalyses the reaction S-ubiquitinyl-[E2 ubiquitin-conjugating enzyme]-L-cysteine + [acceptor protein]-L-lysine = [E2 ubiquitin-conjugating enzyme]-L-cysteine + N(6)-ubiquitinyl-[acceptor protein]-L-lysine.. Its pathway is protein modification; protein ubiquitination. This Arabidopsis thaliana (Mouse-ear cress) protein is RING-H2 finger protein ATL33 (ATL33).